Reading from the N-terminus, the 465-residue chain is UDP-N-acetylmuramate--L-alanine ligase (465 aa).

Residue 112–118 (GTHGKTT) participates in ATP binding.

This sequence belongs to the MurCDEF family.

It is found in the cytoplasm. It catalyses the reaction UDP-N-acetyl-alpha-D-muramate + L-alanine + ATP = UDP-N-acetyl-alpha-D-muramoyl-L-alanine + ADP + phosphate + H(+). It functions in the pathway cell wall biogenesis; peptidoglycan biosynthesis. Cell wall formation. The sequence is that of UDP-N-acetylmuramate--L-alanine ligase from Janthinobacterium sp. (strain Marseille) (Minibacterium massiliensis).